Here is a 307-residue protein sequence, read N- to C-terminus: Barttin (307 aa).

Residues 1–5 (MADEK) are Cytoplasmic-facing. The segment at 1–72 (MADEKTFRIG…VPADSDFQGI (72 aa)) is regulates channel membrane trafficking and anion conductance. Residues 6-26 (TFRIGFIVLGLFLLSLGTFLM) traverse the membrane as a helical segment. Over 27–32 (SHDRPQ) the chain is Extracellular. A helical transmembrane segment spans residues 33–53 (VYGTFYAMGSVMVIGGVIWSM). Residues cysteine 54 and cysteine 56 are each lipidated (S-palmitoyl cysteine). The Cytoplasmic portion of the chain corresponds to 54-307 (CQCYPKITFV…ELGFEPDIQG (254 aa)). Serine 79 and serine 107 each carry phosphoserine. 2 disordered regions span residues 135–154 (TGASSVREGEPRTAQAWMEA) and 161–224 (GSDE…RGPL). Residues 161–171 (GSDENEGEKSH) show a composition bias toward basic and acidic residues. Serine 162 carries the post-translational modification Phosphoserine. Low complexity predominate over residues 172-183 (SQSSPSVGPQGS). Residues 198–207 (SEGSSLQPSP) show a composition bias toward polar residues. Residues serine 228 and serine 289 each carry the phosphoserine modification. The disordered stretch occupies residues 255–307 (RKQQWSLRMKGETVQARAEEPEQEEEDLYYGLPDSPGNPLPDKELGFEPDIQG).

As to quaternary structure, interacts with CLCNK channels. Forms probably heteromers with CLCNKA in the thin ascending limb of Henle and with CLCNKB in the thick ascending limb and more distal segments. Post-translationally, palmitoylation is necessary for activation of plasma membrane-inserted CLC-K/barttin channels. In terms of tissue distribution, expression is evident in inner and outer stripes of the outer medulla of the kidney, most probably representing thin limbs of Henle's loop together with some collecting duct coursing through the outer stripe. In situ hybridization in fetal kidney at 18.5 dpc revealed a clear continuity between hybridization signals from the thin limb of Henle's loop and the distal convoluted tubule, suggesting that part of the expression pattern may result from expression in the thick ascending limb of Henle's loop. In addition, strong signals are present in a subset of cortical tubules, representing distal convoluted tubules or cortical collecting duct. Strong expression is also observed in the inner medulla of the kidney. This expression does not extend all the way to the tip of the papilla. Thus this signal most probably represents cells of the thin ascending limbs. In the inner ear, strong and exclusive expression is detected in marginal cells of the stria vascularis. In addition to cochlear signal, expression is observed in dark cells localized at the base of the crista ampullaris of the vestibular organ.

It localises to the basolateral cell membrane. Regulatory subunit of anion-selective CLCNKA:BSND and CLCNKB:BSND heteromeric channels involved in basolateral chloride conductance along the nephron to achieve urine concentration and maintain systemic acid-base homeostasis, and in the stria vascularis of the inner ear to establish the endocochlear potential necessary for normal hearing. Most likely acts as a chaperone that allosterically regulates proper sorting of CLCNKA:BSND and CLCNKB:BSND channels at the basolateral plasma membrane domain and functional switch to ion conducting state. Mediates constitutive opening of channel common gates. This is Barttin from Mus musculus (Mouse).